A 2715-amino-acid chain; its full sequence is Chromodomain-helicase-DNA-binding protein 6 (2715 aa).

A compositionally biased stretch (basic and acidic residues) spans methionine 1 to glutamine 11. 2 disordered regions span residues methionine 1 to phenylalanine 30 and glutamate 66 to arginine 244. The required for DNA-dependent ATPase activity stretch occupies residues methionine 1–histidine 747. Residues leucine 12–serine 27 are compositionally biased toward polar residues. The segment covering glutamate 123 to cysteine 172 has biased composition (basic and acidic residues). Chromo domains are found at residues asparagine 292–arginine 343 and valine 375–glutamate 439. The region spanning leucine 473–serine 647 is the Helicase ATP-binding domain. Residue aspartate 486–threonine 493 coordinates ATP. The DEAH box signature appears at aspartate 598–histidine 601. In terms of domain architecture, Helicase C-terminal spans leucine 787 to leucine 956. Positions lysine 1318 to valine 1390 are disordered. Positions serine 1321–threonine 1330 are enriched in polar residues. 2 stretches are compositionally biased toward basic and acidic residues: residues isoleucine 1333–glycine 1351 and phenylalanine 1367–alanine 1376. A Myb-like domain is found at arginine 1449 to valine 1503. Positions phenylalanine 2027–asparagine 2038 are enriched in basic and acidic residues. Disordered stretches follow at residues phenylalanine 2027–aspartate 2063, serine 2116–histidine 2148, glutamine 2321–lysine 2351, proline 2373–glutamate 2422, threonine 2547–threonine 2602, and valine 2648–asparagine 2715. A compositionally biased stretch (polar residues) spans serine 2116 to serine 2141. Low complexity predominate over residues proline 2329–serine 2346. Residues threonine 2547–serine 2560 are compositionally biased toward low complexity. 2 stretches are compositionally biased toward basic and acidic residues: residues lysine 2567–proline 2588 and alanine 2706–asparagine 2715.

The protein belongs to the SNF2/RAD54 helicase family. As to quaternary structure, interacts with NFE2L2; involved in activation of the transcription. (Microbial infection) Interacts with the influenza A polymerase complex composed fo PB1, PB2 and PA. In terms of assembly, (Microbial infection) Interacts (via N-terminus) with human papillomavirus protein E8^E2C (via C-terminus); this interaction induces transcriptional repression of the viral genome. Widely expressed.

It is found in the nucleus. The protein localises to the nucleoplasm. The enzyme catalyses ATP + H2O = ADP + phosphate + H(+). Functionally, ATP-dependent chromatin-remodeling factor. Regulates transcription by disrupting nucleosomes in a largely non-sliding manner which strongly increases the accessibility of chromatin; nucleosome disruption requires ATP. Activates transcription of specific genes in response to oxidative stress through interaction with NFE2L2. In terms of biological role, (Microbial infection) Acts as a transcriptional repressor of different viruses including influenza virus or papillomavirus. During influenza virus infection, the viral polymerase complex localizes CHD6 to inactive chromatin where it gets degraded in a proteasome independent-manner. The protein is Chromodomain-helicase-DNA-binding protein 6 (CHD6) of Homo sapiens (Human).